The chain runs to 44 residues: Large ribosomal subunit protein bL34 (44 aa).

Basic residues-rich tracts occupy residues 1 to 22 (MKRT…RARM) and 31 to 44 (IRAR…RLSV). The segment at 1–44 (MKRTLGGTSRKRKRTSGFRARMRTPDGRNVIRARRKKGRHRLSV) is disordered.

This sequence belongs to the bacterial ribosomal protein bL34 family.

The sequence is that of Large ribosomal subunit protein bL34 from Nostoc punctiforme (strain ATCC 29133 / PCC 73102).